The sequence spans 179 residues: ATP synthase subunit b, chloroplastic (179 aa).

Residues 28 to 46 (IINIAALVGILIYAGRDFL) form a helical membrane-spanning segment.

Belongs to the ATPase B chain family. F-type ATPases have 2 components, F(1) - the catalytic core - and F(0) - the membrane proton channel. F(1) has five subunits: alpha(3), beta(3), gamma(1), delta(1), epsilon(1). F(0) has four main subunits: a(1), b(1), b'(1) and c(10-14). The alpha and beta chains form an alternating ring which encloses part of the gamma chain. F(1) is attached to F(0) by a central stalk formed by the gamma and epsilon chains, while a peripheral stalk is formed by the delta, b and b' chains.

It is found in the plastid. Its subcellular location is the chloroplast thylakoid membrane. Its function is as follows. F(1)F(0) ATP synthase produces ATP from ADP in the presence of a proton or sodium gradient. F-type ATPases consist of two structural domains, F(1) containing the extramembraneous catalytic core and F(0) containing the membrane proton channel, linked together by a central stalk and a peripheral stalk. During catalysis, ATP synthesis in the catalytic domain of F(1) is coupled via a rotary mechanism of the central stalk subunits to proton translocation. Functionally, component of the F(0) channel, it forms part of the peripheral stalk, linking F(1) to F(0). The protein is ATP synthase subunit b, chloroplastic of Trieres chinensis (Marine centric diatom).